We begin with the raw amino-acid sequence, 493 residues long: Ribulose bisphosphate carboxylase large chain (493 aa).

Residues Asn132 and Thr182 each coordinate substrate. Lys184 (proton acceptor) is an active-site residue. A substrate-binding site is contributed by Lys186. Residues Lys210, Asp212, and Glu213 each coordinate Mg(2+). Position 210 is an N6-carboxylysine (Lys210). His302 serves as the catalytic Proton acceptor. Substrate is bound by residues Arg303, His335, and Ser387.

The protein belongs to the RuBisCO large chain family. Type I subfamily. In terms of assembly, heterohexadecamer of 8 large chains and 8 small chains. Mg(2+) is required as a cofactor.

It catalyses the reaction 2 (2R)-3-phosphoglycerate + 2 H(+) = D-ribulose 1,5-bisphosphate + CO2 + H2O. The catalysed reaction is D-ribulose 1,5-bisphosphate + O2 = 2-phosphoglycolate + (2R)-3-phosphoglycerate + 2 H(+). RuBisCO catalyzes two reactions: the carboxylation of D-ribulose 1,5-bisphosphate, the primary event in carbon dioxide fixation, as well as the oxidative fragmentation of the pentose substrate. Both reactions occur simultaneously and in competition at the same active site. This chain is Ribulose bisphosphate carboxylase large chain, found in Acidiphilium cryptum (strain JF-5).